The following is a 191-amino-acid chain: Fe/S biogenesis protein NfuA (191 aa).

Positions 149 and 152 each coordinate [4Fe-4S] cluster.

It belongs to the NfuA family. In terms of assembly, homodimer. It depends on [4Fe-4S] cluster as a cofactor.

In terms of biological role, involved in iron-sulfur cluster biogenesis. Binds a 4Fe-4S cluster, can transfer this cluster to apoproteins, and thereby intervenes in the maturation of Fe/S proteins. Could also act as a scaffold/chaperone for damaged Fe/S proteins. The protein is Fe/S biogenesis protein NfuA of Yersinia enterocolitica serotype O:8 / biotype 1B (strain NCTC 13174 / 8081).